We begin with the raw amino-acid sequence, 644 residues long: Exoribonuclease 2 (644 aa).

The region spanning 189-516 (REDLTALNFV…NHRLLKAMIT (328 aa)) is the RNB domain. One can recognise an S1 motif domain in the interval 561–643 (DTRFTAEIID…ETRNVIARPV (83 aa)).

This sequence belongs to the RNR ribonuclease family. RNase II subfamily.

It is found in the cytoplasm. The catalysed reaction is Exonucleolytic cleavage in the 3'- to 5'-direction to yield nucleoside 5'-phosphates.. Its function is as follows. Involved in mRNA degradation. Hydrolyzes single-stranded polyribonucleotides processively in the 3' to 5' direction. This Yersinia pestis bv. Antiqua (strain Antiqua) protein is Exoribonuclease 2.